A 74-amino-acid polypeptide reads, in one-letter code: ATP synthase subunit c (74 aa).

The next 2 helical transmembrane spans lie at 8–28 and 52–72; these read FIGI…VSNI and IGAG…MLLI.

It belongs to the ATPase C chain family. As to quaternary structure, F-type ATPases have 2 components, F(1) - the catalytic core - and F(0) - the membrane proton channel. F(1) has five subunits: alpha(3), beta(3), gamma(1), delta(1), epsilon(1). F(0) has three main subunits: a(1), b(2) and c(10-14). The alpha and beta chains form an alternating ring which encloses part of the gamma chain. F(1) is attached to F(0) by a central stalk formed by the gamma and epsilon chains, while a peripheral stalk is formed by the delta and b chains.

The protein resides in the cell inner membrane. In terms of biological role, f(1)F(0) ATP synthase produces ATP from ADP in the presence of a proton or sodium gradient. F-type ATPases consist of two structural domains, F(1) containing the extramembraneous catalytic core and F(0) containing the membrane proton channel, linked together by a central stalk and a peripheral stalk. During catalysis, ATP synthesis in the catalytic domain of F(1) is coupled via a rotary mechanism of the central stalk subunits to proton translocation. Functionally, key component of the F(0) channel; it plays a direct role in translocation across the membrane. A homomeric c-ring of between 10-14 subunits forms the central stalk rotor element with the F(1) delta and epsilon subunits. In Rickettsia typhi (strain ATCC VR-144 / Wilmington), this protein is ATP synthase subunit c.